Consider the following 43-residue polypeptide: Photosystem I reaction center subunit IX (43 aa).

Residues 7-27 (YLSTAPVLATFWFGLLAGLLI) form a helical membrane-spanning segment.

Belongs to the PsaJ family.

The protein localises to the plastid. It localises to the chloroplast thylakoid membrane. In terms of biological role, may help in the organization of the PsaE and PsaF subunits. This chain is Photosystem I reaction center subunit IX, found in Gnetum parvifolium (Small-leaved jointfir).